The following is a 149-amino-acid chain: Transcriptional repressor NrdR (149 aa).

A zinc finger spans residues 3 to 34 (CPFCSATDTKVIDSRLVADGHQVRRRRECTLC). Positions 49–139 (PRVIKRDDTR…VYRAFEDVSQ (91 aa)) constitute an ATP-cone domain.

This sequence belongs to the NrdR family. The cofactor is Zn(2+).

In terms of biological role, negatively regulates transcription of bacterial ribonucleotide reductase nrd genes and operons by binding to NrdR-boxes. This Shewanella denitrificans (strain OS217 / ATCC BAA-1090 / DSM 15013) protein is Transcriptional repressor NrdR.